The primary structure comprises 158 residues: Endoribonuclease YbeY (158 aa).

Residues His-117, His-121, and His-127 each contribute to the Zn(2+) site.

It belongs to the endoribonuclease YbeY family. The cofactor is Zn(2+).

It localises to the cytoplasm. Functionally, single strand-specific metallo-endoribonuclease involved in late-stage 70S ribosome quality control and in maturation of the 3' terminus of the 16S rRNA. The polypeptide is Endoribonuclease YbeY (Buchnera aphidicola subsp. Schizaphis graminum (strain Sg)).